The sequence spans 41 residues: Large ribosomal subunit protein bL36 (41 aa).

It belongs to the bacterial ribosomal protein bL36 family.

In Bartonella quintana (strain Toulouse) (Rochalimaea quintana), this protein is Large ribosomal subunit protein bL36.